The sequence spans 404 residues: Cysteine desulfurase IscS (404 aa).

Pyridoxal 5'-phosphate is bound by residues A75–T76, N155, Q183, and S203–H205. N6-(pyridoxal phosphate)lysine is present on K206. Position 243 (T243) interacts with pyridoxal 5'-phosphate. The active-site Cysteine persulfide intermediate is the C328. C328 serves as a coordination point for [2Fe-2S] cluster.

Belongs to the class-V pyridoxal-phosphate-dependent aminotransferase family. NifS/IscS subfamily. In terms of assembly, homodimer. Forms a heterotetramer with IscU, interacts with other sulfur acceptors. Pyridoxal 5'-phosphate is required as a cofactor.

The protein resides in the cytoplasm. It catalyses the reaction (sulfur carrier)-H + L-cysteine = (sulfur carrier)-SH + L-alanine. The protein operates within cofactor biosynthesis; iron-sulfur cluster biosynthesis. In terms of biological role, master enzyme that delivers sulfur to a number of partners involved in Fe-S cluster assembly, tRNA modification or cofactor biosynthesis. Catalyzes the removal of elemental sulfur atoms from cysteine to produce alanine. Functions as a sulfur delivery protein for Fe-S cluster synthesis onto IscU, an Fe-S scaffold assembly protein, as well as other S acceptor proteins. This Vibrio cholerae serotype O1 (strain M66-2) protein is Cysteine desulfurase IscS.